Here is a 98-residue protein sequence, read N- to C-terminus: AQIVKLGGDDGALAFVPSKISVAAGEAIEFVNNAGFPHNIVFDEDAVPAGVDADAISYDDYLNSKGETVVRKLSTPGVYGVYCEPHAGAGMKMTITVQ.

The Plastocyanin-like domain occupies 1–98; it reads AQIVKLGGDD…AGMKMTITVQ (98 aa). Cu cation is bound by residues His38, Cys83, His86, and Met91.

The protein belongs to the plastocyanin family. Cu(2+) is required as a cofactor.

Its subcellular location is the plastid. The protein localises to the chloroplast thylakoid membrane. Participates in electron transfer between P700 and the cytochrome b6-f complex in photosystem I. The protein is Plastocyanin (PETE) of Ulva arasakii (Sea lettuce).